The primary structure comprises 183 residues: Bifunctional protein PyrR (183 aa).

The short motif at 102–114 (VVLVDDVLYTGRT) is the PRPP-binding element.

The protein belongs to the purine/pyrimidine phosphoribosyltransferase family. PyrR subfamily. In terms of assembly, homodimer and homohexamer; in equilibrium.

The enzyme catalyses UMP + diphosphate = 5-phospho-alpha-D-ribose 1-diphosphate + uracil. In terms of biological role, regulates transcriptional attenuation of the pyrimidine nucleotide (pyr) operon by binding in a uridine-dependent manner to specific sites on pyr mRNA. This disrupts an antiterminator hairpin in the RNA and favors formation of a downstream transcription terminator, leading to a reduced expression of downstream genes. Its function is as follows. Also displays a weak uracil phosphoribosyltransferase activity which is not physiologically significant. The sequence is that of Bifunctional protein PyrR from Listeria monocytogenes serotype 4b (strain CLIP80459).